The following is a 212-amino-acid chain: Proteasome subunit beta 2 (212 aa).

Residues 1 to 13 (MSVDEKVARALKG) constitute a propeptide, removed in mature form; by autocatalysis. Catalysis depends on Thr-14, which acts as the Nucleophile.

Belongs to the peptidase T1B family. In terms of assembly, the 20S proteasome core is composed of 14 alpha and 14 beta subunits that assemble into four stacked heptameric rings, resulting in a barrel-shaped structure. The two inner rings, each composed of seven catalytic beta subunits, are sandwiched by two outer rings, each composed of seven alpha subunits. The catalytic chamber with the active sites is on the inside of the barrel. Has a gated structure, the ends of the cylinder being occluded by the N-termini of the alpha-subunits. Is capped at one or both ends by the proteasome regulatory ATPase, PAN.

The protein resides in the cytoplasm. The catalysed reaction is Cleavage of peptide bonds with very broad specificity.. With respect to regulation, the formation of the proteasomal ATPase PAN-20S proteasome complex, via the docking of the C-termini of PAN into the intersubunit pockets in the alpha-rings, triggers opening of the gate for substrate entry. Interconversion between the open-gate and close-gate conformations leads to a dynamic regulation of the 20S proteasome proteolysis activity. Functionally, component of the proteasome core, a large protease complex with broad specificity involved in protein degradation. This is Proteasome subunit beta 2 from Ignicoccus hospitalis (strain KIN4/I / DSM 18386 / JCM 14125).